Consider the following 530-residue polypeptide: Chaperone Ric-8A (530 aa).

A Phosphoserine modification is found at serine 435. 2 positions are modified to phosphothreonine: threonine 440 and threonine 442. Residues serine 501, serine 522, serine 523, and serine 527 each carry the phosphoserine modification.

Belongs to the synembryn family. Interacts with GDP-bound G alpha proteins GNAI1, GNAO1 and GNAQ, and with GNA13 with lower affinity. Does not interact with G-alpha proteins when they are in complex with subunits beta and gamma. Interacts (via C-terminus) with RGS14; the interaction stimulates the dissociation of the complex between RGS14 and the active GTP-bound form of GNAI1. Interacts with NCS1; interaction is favored in the absence of Ca(2+) and myristoylation of NCS1 is not required. Post-translationally, phosphorylated at Ser-435 and Thr-440 by CK2, stabilizing its interface with G alpha proteins.

It is found in the cytoplasm. The protein localises to the cell cortex. Its function is as follows. Chaperone that specifically binds and folds nascent G alpha proteins prior to G protein heterotrimer formation, promoting their stability and activity: folds GNAI1, GNAO1, GNA13 and GNAQ. Does not fold G(s) G-alpha proteins GNAS nor GNAL. Also acts as a guanine nucleotide exchange factor (GEF) for G alpha proteins by stimulating exchange of bound GDP for free GTP. Involved in regulation of microtubule pulling forces during mitotic movement of chromosomes by stimulating G(i)-alpha protein (GNAI1), possibly leading to release G(i)-alpha-GTP and NuMA proteins from the NuMA-GPSM2-G(i)-alpha-GDP complex. Also acts as an activator for G(q)-alpha (GNAQ) protein by enhancing the G(q)-coupled receptor-mediated ERK activation. This is Chaperone Ric-8A (RIC8A) from Pongo abelii (Sumatran orangutan).